The chain runs to 344 residues: Oxygen sensor histidine kinase NreB (344 aa).

Residues C58, C61, C73, and C76 each contribute to the [4Fe-4S] cluster site. The 193-residue stretch at 152–344 (RISRELHDSV…GTNVTLNIPI (193 aa)) folds into the Histidine kinase domain. H158 is modified (phosphohistidine; by autocatalysis).

Requires [4Fe-4S] cluster as cofactor. Post-translationally, autophosphorylated.

The protein localises to the cytoplasm. It carries out the reaction ATP + protein L-histidine = ADP + protein N-phospho-L-histidine.. In terms of biological role, member of the two-component regulatory system NreB/NreC involved in the control of dissimilatory nitrate/nitrite reduction in response to oxygen. NreB functions as a direct oxygen sensor histidine kinase which is autophosphorylated, in the absence of oxygen, probably at the conserved histidine residue, and transfers its phosphate group probably to a conserved aspartate residue of NreC. NreB/NreC activates the expression of the nitrate (narGHJI) and nitrite (nir) reductase operons, as well as the putative nitrate transporter gene narT. The polypeptide is Oxygen sensor histidine kinase NreB (nreB) (Staphylococcus aureus (strain Mu3 / ATCC 700698)).